Consider the following 192-residue polypeptide: Imidazoleglycerol-phosphate dehydratase (192 aa).

Belongs to the imidazoleglycerol-phosphate dehydratase family.

The protein localises to the cytoplasm. It catalyses the reaction D-erythro-1-(imidazol-4-yl)glycerol 3-phosphate = 3-(imidazol-4-yl)-2-oxopropyl phosphate + H2O. It participates in amino-acid biosynthesis; L-histidine biosynthesis; L-histidine from 5-phospho-alpha-D-ribose 1-diphosphate: step 6/9. The sequence is that of Imidazoleglycerol-phosphate dehydratase from Staphylococcus saprophyticus subsp. saprophyticus (strain ATCC 15305 / DSM 20229 / NCIMB 8711 / NCTC 7292 / S-41).